Consider the following 222-residue polypeptide: Probable pyridoxal 5'-phosphate synthase subunit SNO3 (222 aa).

Residue 58 to 60 participates in L-glutamine binding; sequence GES. C91 acts as the Nucleophile in catalysis. Residues R120 and 151-152 contribute to the L-glutamine site; that span reads IR. Residues H197 and E199 each act as charge relay system in the active site.

This sequence belongs to the glutaminase PdxT/SNO family.

It catalyses the reaction aldehydo-D-ribose 5-phosphate + D-glyceraldehyde 3-phosphate + L-glutamine = pyridoxal 5'-phosphate + L-glutamate + phosphate + 3 H2O + H(+). The enzyme catalyses L-glutamine + H2O = L-glutamate + NH4(+). The protein operates within cofactor biosynthesis; pyridoxal 5'-phosphate biosynthesis. Its function is as follows. Catalyzes the hydrolysis of glutamine to glutamate and ammonia as part of the biosynthesis of pyridoxal 5'-phosphate. The resulting ammonia molecule is channeled to the active site of a SNZ isoform. The polypeptide is Probable pyridoxal 5'-phosphate synthase subunit SNO3 (SNO3) (Saccharomyces cerevisiae (strain ATCC 204508 / S288c) (Baker's yeast)).